Here is a 220-residue protein sequence, read N- to C-terminus: dTTP/UTP pyrophosphatase (220 aa).

Catalysis depends on D83, which acts as the Proton acceptor.

It belongs to the Maf family. YhdE subfamily. The cofactor is a divalent metal cation.

The protein resides in the cytoplasm. The catalysed reaction is dTTP + H2O = dTMP + diphosphate + H(+). The enzyme catalyses UTP + H2O = UMP + diphosphate + H(+). In terms of biological role, nucleoside triphosphate pyrophosphatase that hydrolyzes dTTP and UTP. May have a dual role in cell division arrest and in preventing the incorporation of modified nucleotides into cellular nucleic acids. This chain is dTTP/UTP pyrophosphatase, found in Syntrophotalea carbinolica (strain DSM 2380 / NBRC 103641 / GraBd1) (Pelobacter carbinolicus).